The chain runs to 417 residues: MAQKEGGRTVPCCSRPKVAALTAGTLLLLTAIGAASWAIVAVLLRSDQEPLYPVQVSSADARLMVFDKTEGTWRLLCSSRSNARVAGLSCEEMGFLRALTHSELDVRTAGANGTSGFFCVDEGRLPHTQRLLEVISVCDCPRGRFLAAICQDCGRRKLPVDRIVGGRDTSLGRWPWQVSLRYDGAHLCGGSLLSGDWVLTAAHCFPERNRVLSRWRVFAGAVAQASPHGLQLGVQAVVYHGGYLPFRDPNSEENSNDIALVHLSSPLPLTEYIQPVCLPAAGQALVDGKICTVTGWGNTQYYGQQAGVLQEARVPIISNDVCNGADFYGNQIKPKMFCAGYPEGGIDACQGDSGGPFVCEDSISRTPRWRLCGIVSWGTGCALAQKPGVYTKVSDFREWIFQAIKTHSEASGMVTQL.

The Cytoplasmic portion of the chain corresponds to 1 to 23 (MAQKEGGRTVPCCSRPKVAALTA). Residues 24–44 (GTLLLLTAIGAASWAIVAVLL) form a helical; Signal-anchor for type II membrane protein membrane-spanning segment. At 45 to 417 (RSDQEPLYPV…SEASGMVTQL (373 aa)) the chain is on the extracellular side. One can recognise an SRCR domain in the interval 54–151 (VQVSSADARL…RGRFLAAICQ (98 aa)). Disulfide bonds link cysteine 77–cysteine 140, cysteine 90–cysteine 150, cysteine 119–cysteine 138, cysteine 153–cysteine 277, cysteine 188–cysteine 204, cysteine 291–cysteine 359, cysteine 322–cysteine 338, and cysteine 349–cysteine 381. A glycan (N-linked (GlcNAc...) asparagine) is linked at asparagine 112. A Peptidase S1 domain is found at 163-405 (IVGGRDTSLG…FREWIFQAIK (243 aa)). Residues histidine 203 and aspartate 257 each act as charge relay system in the active site. Serine 353 functions as the Charge relay system in the catalytic mechanism.

Belongs to the peptidase S1 family. As to expression, detected in liver and kidney.

Its subcellular location is the cell membrane. It localises to the apical cell membrane. It catalyses the reaction Cleavage after basic amino-acid residues, with Arg strongly preferred to Lys.. Functionally, serine protease that cleaves extracellular substrates, and contributes to the proteolytic processing of growth factors, such as HGF and MST1/HGFL. Plays a role in cell growth and maintenance of cell morphology. Plays a role in the proteolytic processing of ACE2. Mediates the proteolytic cleavage of urinary UMOD that is required for UMOD polymerization. This Homo sapiens (Human) protein is Serine protease hepsin (HPN).